We begin with the raw amino-acid sequence, 337 residues long: GTP 3',8-cyclase (337 aa).

In terms of domain architecture, Radical SAM core spans 1–226; sequence MNRVDYLRIS…REKIRQKWGL (226 aa). Arg8 is a binding site for GTP. 2 residues coordinate [4Fe-4S] cluster: Cys15 and Cys19. S-adenosyl-L-methionine is bound at residue Tyr21. Cys22 is a binding site for [4Fe-4S] cluster. Arg60 contributes to the GTP binding site. Residue Gly64 coordinates S-adenosyl-L-methionine. A GTP-binding site is contributed by Thr91. Ser115 contacts S-adenosyl-L-methionine. Residue Lys155 participates in GTP binding. Residue Met189 coordinates S-adenosyl-L-methionine. [4Fe-4S] cluster is bound by residues Cys260 and Cys263. GTP is bound at residue 265–267; it reads RMR. Cys277 is a binding site for [4Fe-4S] cluster.

Belongs to the radical SAM superfamily. MoaA family. Monomer and homodimer. [4Fe-4S] cluster serves as cofactor.

The catalysed reaction is GTP + AH2 + S-adenosyl-L-methionine = (8S)-3',8-cyclo-7,8-dihydroguanosine 5'-triphosphate + 5'-deoxyadenosine + L-methionine + A + H(+). It functions in the pathway cofactor biosynthesis; molybdopterin biosynthesis. Its function is as follows. Catalyzes the cyclization of GTP to (8S)-3',8-cyclo-7,8-dihydroguanosine 5'-triphosphate. This is GTP 3',8-cyclase from Crocosphaera subtropica (strain ATCC 51142 / BH68) (Cyanothece sp. (strain ATCC 51142)).